A 272-amino-acid chain; its full sequence is MVPTMIYSAILALSAFTPSVLAQTRSSGCGKQPSLTNGVHNINGREYILKVPDNYDKNKAHHLVFGLHWRGGNMWNIVDGQSVQPWYGLETRAQGSTIFVAPNGKNAGWANNGGEDIAFIDAIIKQVEGDLCVDQSSRFATGFSWGGGMSYSLACSRAKQFRAVSVLSGGVISGCDGGNDPIAYLGIHGINDGVLPFQGGVNLAQKFVKNNRCQQANVGTPQPGSHGSVRTDFKGCSKPVSFIAYDGGHDAAPLGVGSSLAPDATWKFFMAA.

The signal sequence occupies residues 1 to 22; it reads MVPTMIYSAILALSAFTPSVLA.

Belongs to the faeC family.

Its subcellular location is the secreted. It catalyses the reaction feruloyl-polysaccharide + H2O = ferulate + polysaccharide.. In terms of biological role, involved in degradation of plant cell walls. Hydrolyzes the feruloyl-arabinose ester bond in arabinoxylans, and the feruloyl-galactose ester bond in pectin. Active against paranitrophenyl-acetate, methyl ferulate and wheat arabinoxylan. This Neosartorya fischeri (strain ATCC 1020 / DSM 3700 / CBS 544.65 / FGSC A1164 / JCM 1740 / NRRL 181 / WB 181) (Aspergillus fischerianus) protein is Probable feruloyl esterase C (faeC).